The following is a 504-amino-acid chain: Putative lipase ATG15 (504 aa).

Position 1 (Met1) is a topological domain, cytoplasmic. A helical; Signal-anchor for type II membrane protein membrane pass occupies residues 2–22; that stretch reads LGRQVTMLLKVIVAVAVLFVW. The Lumenal portion of the chain corresponds to 23–504; it reads HRSRDSSRGD…WLGICTDYGV (482 aa). N-linked (GlcNAc...) asparagine glycosylation is present at Asn183. The Charge relay system role is filled by Ser313. The interval 458 to 484 is disordered; that stretch reads EESSSSIASSSQLTSSHSESETLTSTD. Positions 461–483 are enriched in low complexity; it reads SSSIASSSQLTSSHSESETLTST.

This sequence belongs to the AB hydrolase superfamily. Lipase family. In terms of assembly, binds to both phosphatidylinositol (PI) and phosphatidylinositol 3,5-bisphosphate (PIP2).

It localises to the endosome. Its subcellular location is the multivesicular body membrane. The protein resides in the prevacuolar compartment membrane. It catalyses the reaction a triacylglycerol + H2O = a diacylglycerol + a fatty acid + H(+). In terms of biological role, lipase which is essential for lysis of subvacuolar cytoplasm to vacuole targeted bodies and intravacuolar autophagic bodies. Involved in the lysis of intravacuolar multivesicular body (MVB) vesicles. The intravacuolar membrane disintegration by ATG15 is critical to life span extension. The chain is Putative lipase ATG15 (ATG15) from Candida glabrata (strain ATCC 2001 / BCRC 20586 / JCM 3761 / NBRC 0622 / NRRL Y-65 / CBS 138) (Yeast).